The primary structure comprises 68 residues: Large ribosomal subunit protein uL29 (68 aa).

The protein belongs to the universal ribosomal protein uL29 family.

The sequence is that of Large ribosomal subunit protein uL29 from Streptococcus gordonii (strain Challis / ATCC 35105 / BCRC 15272 / CH1 / DL1 / V288).